The primary structure comprises 273 residues: Undecaprenyl-diphosphatase (273 aa).

A run of 7 helical transmembrane segments spans residues 6-26 (SLLI…LPVS), 45-65 (AKTF…VMFW), 90-110 (LTLI…LLFH), 116-136 (LFNP…LIAA), 190-210 (YAAS…ATAL), 222-242 (GDIS…LIAI), and 252-272 (ISFI…YVVF).

This sequence belongs to the UppP family.

Its subcellular location is the cell inner membrane. The catalysed reaction is di-trans,octa-cis-undecaprenyl diphosphate + H2O = di-trans,octa-cis-undecaprenyl phosphate + phosphate + H(+). Catalyzes the dephosphorylation of undecaprenyl diphosphate (UPP). Confers resistance to bacitracin. The protein is Undecaprenyl-diphosphatase of Shigella sonnei (strain Ss046).